We begin with the raw amino-acid sequence, 91 residues long: Sec-independent protein translocase protein TatA (91 aa).

The chain crosses the membrane as a helical span at residues 1–21; the sequence is MGIFDWKHWIVILIVVVLVFG. The interval 41 to 91 is disordered; the sequence is KAMNDDDKPAEQPAPQPQQAQPAPQGSPLNQPHTIDAQAHKVDEPIRKDQV. Residues 51–64 are compositionally biased toward low complexity; it reads EQPAPQPQQAQPAP. Residues 78–91 show a composition bias toward basic and acidic residues; the sequence is QAHKVDEPIRKDQV.

Belongs to the TatA/E family. In terms of assembly, the Tat system comprises two distinct complexes: a TatABC complex, containing multiple copies of TatA, TatB and TatC subunits, and a separate TatA complex, containing only TatA subunits. Substrates initially bind to the TatABC complex, which probably triggers association of the separate TatA complex to form the active translocon.

It is found in the cell inner membrane. Part of the twin-arginine translocation (Tat) system that transports large folded proteins containing a characteristic twin-arginine motif in their signal peptide across membranes. TatA could form the protein-conducting channel of the Tat system. The polypeptide is Sec-independent protein translocase protein TatA (Pseudomonas syringae pv. syringae (strain B728a)).